The following is a 620-amino-acid chain: EF-hand calcium-binding domain-containing protein 7 (620 aa).

The tract at residues 1–24 is disordered; it reads MANHSSLPSQKYAASERQEYQKPQ. 2 consecutive EF-hand domains span residues 98-133 and 134-169; these read ATKNELLKAFRKIDTNNKGYILHNDLYEILTTKGEK and MSQEEVNSVFRLAEVNSNGKLDYNKFCSTFFKTCEQ. The interval 176 to 234 is disordered; it reads ERMDSNSKAKRQQFGSYIEKSPERSSSPKSSHGNLKLFDSETSTRKENKSSRPSSARSY. The segment covering 213 to 225 has biased composition (basic and acidic residues); that stretch reads FDSETSTRKENKS. The EF-hand 3 domain maps to 394 to 429; that stretch reads EFKSALSDMFDIIDLDGNGLLSLAEYNFFEMRTSGE. The Ca(2+) site is built by Asp-407, Asp-409, Asn-411, and Glu-418.

The protein localises to the cell projection. The protein resides in the cilium membrane. Functionally, plays a role in the ciliary Hedgehog (Hh) signaling. This chain is EF-hand calcium-binding domain-containing protein 7 (efcab7), found in Xenopus laevis (African clawed frog).